The following is a 180-amino-acid chain: ATP-dependent protease subunit HslV (180 aa).

Thr5 is an active-site residue. Gly161, Cys164, and Thr167 together coordinate Na(+).

The protein belongs to the peptidase T1B family. HslV subfamily. As to quaternary structure, a double ring-shaped homohexamer of HslV is capped on each side by a ring-shaped HslU homohexamer. The assembly of the HslU/HslV complex is dependent on binding of ATP.

It localises to the cytoplasm. It carries out the reaction ATP-dependent cleavage of peptide bonds with broad specificity.. Allosterically activated by HslU binding. In terms of biological role, protease subunit of a proteasome-like degradation complex believed to be a general protein degrading machinery. The polypeptide is ATP-dependent protease subunit HslV (Campylobacter curvus (strain 525.92)).